Here is a 514-residue protein sequence, read N- to C-terminus: 2,3-bisphosphoglycerate-independent phosphoglycerate mutase (514 aa).

Positions 14 and 64 each coordinate Mn(2+). The active-site Phosphoserine intermediate is the Ser64. Substrate-binding positions include His125, 155 to 156, Arg187, Arg193, 263 to 266, and Lys336; these read RD and RADR. Mn(2+) is bound by residues Asp403, His407, Asp444, His445, and His463.

It belongs to the BPG-independent phosphoglycerate mutase family. Monomer. Mn(2+) is required as a cofactor.

The catalysed reaction is (2R)-2-phosphoglycerate = (2R)-3-phosphoglycerate. The protein operates within carbohydrate degradation; glycolysis; pyruvate from D-glyceraldehyde 3-phosphate: step 3/5. Its function is as follows. Catalyzes the interconversion of 2-phosphoglycerate and 3-phosphoglycerate. The sequence is that of 2,3-bisphosphoglycerate-independent phosphoglycerate mutase from Shewanella pealeana (strain ATCC 700345 / ANG-SQ1).